We begin with the raw amino-acid sequence, 449 residues long: MSSSHGYRASWWTYILHQVPHTNFQFEVVDNQFAPQEWPYQQALLFLASIAGLCLAISLILICVYLIRFCCCSSQEDDDSKSHRVCCVTWSCVAAVIICCAGIGIGFYGNSETNDGVYQVTYSLMNANHTLTSINLLISDTVELLSSVVRSDLTQLEEIFSKRTEFLVMIRNTRRQVESVAQQLAEISFWKGPEPNPNALAEQVNFIEDYRWLAYILLLLLDLIICLFTLLGLAKQIKWLVIVMTVVSFFVLLLSWGSMGLEMATAVGLSDFCSDPDAYVMNQTQAITNINPDILQYYISCNQDVTNPFRQRLTMSQRALSNIHSQLHGLEREAVPQFPTAEKNLLVVQGMLNTTEGNFHHLVALLNCRGLHKDYVDALKGLCYDGMEGILFLLLFSFLSALSFTAAICSLPRAWKRFQNRDLDYDDMDEDDPFNPQESKRFVQWQSSI.

The Extracellular segment spans residues 1–43 (MSSSHGYRASWWTYILHQVPHTNFQFEVVDNQFAPQEWPYQQA). A helical transmembrane segment spans residues 44–64 (LLFLASIAGLCLAISLILICV). Topologically, residues 65–86 (YLIRFCCCSSQEDDDSKSHRVC) are cytoplasmic. Residues 87–107 (CVTWSCVAAVIICCAGIGIGF) traverse the membrane as a helical segment. The Extracellular segment spans residues 108-212 (YGNSETNDGV…QVNFIEDYRW (105 aa)). N-linked (GlcNAc...) asparagine glycosylation is present at Asn128. The helical transmembrane segment at 213–233 (LAYILLLLLDLIICLFTLLGL) threads the bilayer. The Cytoplasmic portion of the chain corresponds to 234-238 (AKQIK). The chain crosses the membrane as a helical span at residues 239–259 (WLVIVMTVVSFFVLLLSWGSM). The Extracellular segment spans residues 260-388 (GLEMATAVGL…LKGLCYDGME (129 aa)). 2 disulfides stabilise this stretch: Cys273-Cys383 and Cys301-Cys368. N-linked (GlcNAc...) asparagine glycans are attached at residues Asn282 and Asn353. A helical transmembrane segment spans residues 389 to 409 (GILFLLLFSFLSALSFTAAIC). Topologically, residues 410–449 (SLPRAWKRFQNRDLDYDDMDEDDPFNPQESKRFVQWQSSI) are cytoplasmic.

It belongs to the tweety family. In terms of assembly, homotetramer; disulfide-linked. Homodimer.

The protein resides in the cell membrane. It carries out the reaction chloride(in) = chloride(out). The catalysed reaction is L-glutamate(out) = L-glutamate(in). Its function is as follows. May act as a calcium-independent, swelling-dependent volume-regulated anion channel (VRAC-swell) which plays a pivotal role in the process of regulatory volume decrease (RVD) in the brain through the efflux of anions like chloride and organic osmolytes like glutamate. This chain is Protein tweety homolog 1 (ttyh1), found in Xenopus tropicalis (Western clawed frog).